Reading from the N-terminus, the 187-residue chain is Elongation factor P (187 aa).

This sequence belongs to the elongation factor P family.

The protein localises to the cytoplasm. It participates in protein biosynthesis; polypeptide chain elongation. Involved in peptide bond synthesis. Stimulates efficient translation and peptide-bond synthesis on native or reconstituted 70S ribosomes in vitro. Probably functions indirectly by altering the affinity of the ribosome for aminoacyl-tRNA, thus increasing their reactivity as acceptors for peptidyl transferase. The protein is Elongation factor P of Kocuria rhizophila (strain ATCC 9341 / DSM 348 / NBRC 103217 / DC2201).